The sequence spans 153 residues: Ribosome maturation factor RimP (153 aa).

Belongs to the RimP family.

The protein resides in the cytoplasm. Required for maturation of 30S ribosomal subunits. The sequence is that of Ribosome maturation factor RimP from Marinomonas sp. (strain MWYL1).